The chain runs to 316 residues: Palmitoyltransferase ZDHHC3-A (316 aa).

Residues 1–45 (MRSPVPRFRDVERQASGLQPPQCLPSCHERQSSMWFIKDACGIVC) are Cytoplasmic-facing. A helical transmembrane segment spans residues 46–66 (AIITWFLVFFAEFVVLFVMLI). At 67 to 70 (PSKN) the chain is on the lumenal side. Residues 71–91 (LTYSLVNGTLFNSLAFLALAS) traverse the membrane as a helical segment. Topologically, residues 92-169 (HFRAMCTDPG…NCVGENNQKY (78 aa)) are cytoplasmic. One can recognise a DHHC domain in the interval 124–175 (VYKCPKCCSIKPDRAHHCSVCKRCIRKMDHHCPWVNNCVGENNQKYFVLFTM). A lipid anchor (S-palmitoyl cysteine) is attached at C144. C155 serves as the catalytic S-palmitoyl cysteine intermediate. Residues 170 to 190 (FVLFTMYICLISLHSLVMVVF) traverse the membrane as a helical segment. Residues 191-212 (HFLNCFEDDWTKCSTFSPPATV) lie on the Lumenal side of the membrane. A helical transmembrane segment spans residues 213–233 (ILLILLCFEGLLFLIFTSVMF). At 234 to 316 (GTQVHSICTD…DVIEIPLEPH (83 aa)) the chain is on the cytoplasmic side.

The protein belongs to the DHHC palmitoyltransferase family. As to quaternary structure, monomer. Homooligomers. The monomeric form has a higher catalytic activity. Forms heterooligomers with zdhhc7. In terms of processing, autopalmitoylated.

It localises to the golgi apparatus membrane. It carries out the reaction L-cysteinyl-[protein] + hexadecanoyl-CoA = S-hexadecanoyl-L-cysteinyl-[protein] + CoA. The catalysed reaction is L-cysteinyl-[protein] + tetradecanoyl-CoA = S-tetradecanoyl-L-cysteinyl-[protein] + CoA. It catalyses the reaction L-cysteinyl-[protein] + octadecanoyl-CoA = S-octadecanoyl-L-cysteinyl-[protein] + CoA. Functionally, golgi-localized palmitoyltransferase that catalyzes the addition of palmitate onto various protein substrates and regulates their association with membranes. Has no stringent fatty acid selectivity and in addition to palmitate can also transfer onto target proteins myristate from tetradecanoyl-CoA and stearate from octadecanoyl-CoA. The polypeptide is Palmitoyltransferase ZDHHC3-A (zdhhc3a) (Danio rerio (Zebrafish)).